A 215-amino-acid chain; its full sequence is Protein slowmo (215 aa).

The PRELI/MSF1 domain maps to 1–170 (MKIWTSEHIF…VIGLINTEVK (170 aa)).

This sequence belongs to the slowmo family. In terms of tissue distribution, expressed in specific tissues such as the developing central nervous system (CNS) and both the male and female germline. In the CNS, it is restricted in a subset of cells during embryogenesis and early larval development. In embryos, it is also expressed in salivary glands. In the testis, expressed in somatic cyst cells throughout the distal region where the mitotic cysts develop, extending through to meiotic cysts.

The protein resides in the mitochondrion. In terms of biological role, required to regulate peristaltic movement and also for germline proliferation in males and females. The polypeptide is Protein slowmo (slmo) (Drosophila melanogaster (Fruit fly)).